Consider the following 437-residue polypeptide: Glutamyl-tRNA reductase (437 aa).

Substrate is bound by residues Thr49–Arg52, Ser109, Glu114–Gln116, and Gln120. The Nucleophile role is filled by Cys50. Gly198–Ser203 is an NADP(+) binding site.

It belongs to the glutamyl-tRNA reductase family. Homodimer.

It carries out the reaction (S)-4-amino-5-oxopentanoate + tRNA(Glu) + NADP(+) = L-glutamyl-tRNA(Glu) + NADPH + H(+). The protein operates within porphyrin-containing compound metabolism; protoporphyrin-IX biosynthesis; 5-aminolevulinate from L-glutamyl-tRNA(Glu): step 1/2. It functions in the pathway porphyrin-containing compound metabolism; chlorophyll biosynthesis. In terms of biological role, catalyzes the NADPH-dependent reduction of glutamyl-tRNA(Glu) to glutamate 1-semialdehyde (GSA). This Prochlorococcus marinus (strain SARG / CCMP1375 / SS120) protein is Glutamyl-tRNA reductase.